The chain runs to 555 residues: Energy-dependent translational throttle protein EttA (555 aa).

ABC transporter domains lie at 6–259 (YTMH…AQEA) and 324–550 (LEVS…RIKY). 39–46 (GLNGAGKS) provides a ligand contact to ATP. An arm region spans residues 95–139 (SEVVNALKRLDEVYALYADPDADFDKLAAEQGRLEEIIQAHDGHN). A ptIM region spans residues 242–322 (GNYSSWLEQK…IPPGPRLGDK (81 aa)). 356 to 363 (GPNGAGKS) serves as a coordination point for ATP.

This sequence belongs to the ABC transporter superfamily. ABCF family. Translational throttle EttA subfamily. Monomer. Probably contacts ribosomal proteins L1, L5, L33 and S7, the 16S and 23S rRNA and the P-site containing tRNA(fMet).

The protein resides in the cytoplasm. The enzyme catalyses ATP + H2O = ADP + phosphate + H(+). In terms of biological role, a translation factor that gates the progression of the 70S ribosomal initiation complex (IC, containing tRNA(fMet) in the P-site) into the translation elongation cycle by using a mechanism sensitive to the ATP/ADP ratio. Binds to the 70S ribosome E-site where it modulates the state of the translating ribosome during subunit translocation. ATP hydrolysis probably frees it from the ribosome, which can enter the elongation phase. This Escherichia coli O157:H7 protein is Energy-dependent translational throttle protein EttA.